The following is a 1009-amino-acid chain: Type VII secretion system accessory factor EsaA (1009 aa).

A helical membrane pass occupies residues 7 to 27; it reads IYALIVTLIIIIAIVSMIFFV. Positions 680–697 are enriched in basic and acidic residues; that stretch reads TFAEEPQEPKIDKGKNDE. The segment at 680–707 is disordered; that stretch reads TFAEEPQEPKIDKGKNDEFNTMSSNLDK. 5 helical membrane passes run 822 to 842, 869 to 889, 903 to 923, 928 to 948, and 979 to 999; these read ISPT…AYIF, VITS…VGLI, KFIL…TYLL, SIGM…MNNL, and IGLV…LNMF.

This sequence belongs to the EsaA family. As to quaternary structure, homodimer. Interacts with EssB.

It localises to the cell membrane. Functionally, component of the type VII secretion system (Ess). Provides together with EssB and other components such as EssC and EssE a secretion plateform accross the cytoplasmic membrane in the host. In Staphylococcus aureus (strain USA300), this protein is Type VII secretion system accessory factor EsaA.